Consider the following 259-residue polypeptide: UPF0246 protein NMB0895 (259 aa).

Belongs to the UPF0246 family.

This Neisseria meningitidis serogroup B (strain ATCC BAA-335 / MC58) protein is UPF0246 protein NMB0895.